The primary structure comprises 445 residues: Branched-chain amino acid permease BraB (445 aa).

12 helical membrane-spanning segments follow: residues 11–31 (IIIG…IYPP), 45–65 (IGGF…AIAL), 79–99 (PVFG…LFAI), 122–142 (LSLL…ALNP), 158–178 (FTII…GLGA), 192–212 (FLEG…VVVV), 233–253 (AGVI…YLGA), 275–295 (YLFG…ACLT), 311–331 (LIPA…SLII), 339–359 (IIAF…VIIV), 375–395 (IACL…AAGF), and 415–435 (IGWV…TLFI).

The protein belongs to the branched chain amino acid transporter family.

It is found in the cell membrane. In terms of biological role, branched-chain amino acid transport system which is involved in the uptake of isoleucine, valine and probably leucine. Together with BcaP and BrnQ, plays an important role in the activation of CodY, a branched-chain amino acid-responsive transcriptional regulator that controls the expression of several dozen transcription units in B.subtilis. In Bacillus subtilis (strain 168), this protein is Branched-chain amino acid permease BraB.